The following is a 290-amino-acid chain: Serine protease 27 (290 aa).

An N-terminal signal peptide occupies residues 1–22 (MRRPAAVPLLLLLCFGSQRAKA). Residues 23 to 34 (ATACGRPRMLNR) constitute a propeptide, activation peptide. The 243-residue stretch at 35-277 (MVGGQDTQEG…HHNWIHRIIP (243 aa)) folds into the Peptidase S1 domain. N-linked (GlcNAc...) asparagine glycosylation is present at N55. C60 and C76 form a disulfide bridge. The Charge relay system role is filled by H75. N-linked (GlcNAc...) asparagine glycosylation occurs at N79. D124 acts as the Charge relay system in catalysis. 3 disulfide bridges follow: C158/C235, C191/C214, and C225/C253. Residue S229 is the Charge relay system of the active site.

This sequence belongs to the peptidase S1 family. Post-translationally, N-glycosylated. As to expression, expressed predominantly in the pancreas.

The protein resides in the secreted. The sequence is that of Serine protease 27 (PRSS27) from Homo sapiens (Human).